A 428-amino-acid polypeptide reads, in one-letter code: Enolase (428 aa).

Position 167 (Q167) interacts with (2R)-2-phosphoglycerate. The active-site Proton donor is E209. The Mg(2+) site is built by D246, E289, and D316. (2R)-2-phosphoglycerate-binding residues include K341, R370, S371, and K392. K341 acts as the Proton acceptor in catalysis.

It belongs to the enolase family. As to quaternary structure, component of the RNA degradosome, a multiprotein complex involved in RNA processing and mRNA degradation. Mg(2+) is required as a cofactor.

The protein resides in the cytoplasm. The protein localises to the secreted. It is found in the cell surface. It carries out the reaction (2R)-2-phosphoglycerate = phosphoenolpyruvate + H2O. It functions in the pathway carbohydrate degradation; glycolysis; pyruvate from D-glyceraldehyde 3-phosphate: step 4/5. Its function is as follows. Catalyzes the reversible conversion of 2-phosphoglycerate (2-PG) into phosphoenolpyruvate (PEP). It is essential for the degradation of carbohydrates via glycolysis. In Saccharophagus degradans (strain 2-40 / ATCC 43961 / DSM 17024), this protein is Enolase.